The sequence spans 192 residues: A-type ATP synthase subunit E (192 aa).

This sequence belongs to the V-ATPase E subunit family. In terms of assembly, has multiple subunits with at least A(3), B(3), C, D, E, F, H, I and proteolipid K(x).

Its subcellular location is the cell membrane. In terms of biological role, component of the A-type ATP synthase that produces ATP from ADP in the presence of a proton gradient across the membrane. The polypeptide is A-type ATP synthase subunit E (Sulfolobus acidocaldarius (strain ATCC 33909 / DSM 639 / JCM 8929 / NBRC 15157 / NCIMB 11770)).